A 414-amino-acid polypeptide reads, in one-letter code: Tyrosine--tRNA ligase (414 aa).

L-tyrosine is bound at residue Tyr38. A 'HIGH' region motif is present at residues 43-52; it reads CTARSLHIGS. Residues Tyr172 and Gln176 each contribute to the L-tyrosine site. The 'KMSKS' region motif lies at 232-236; it reads KMGKT. Residue Lys235 participates in ATP binding. The region spanning 345 to 412 is the S4 RNA-binding domain; sequence ISVAKLLQLA…GKKRRIKVVV (68 aa).

Belongs to the class-I aminoacyl-tRNA synthetase family. TyrS type 1 subfamily. As to quaternary structure, homodimer.

The protein resides in the cytoplasm. The enzyme catalyses tRNA(Tyr) + L-tyrosine + ATP = L-tyrosyl-tRNA(Tyr) + AMP + diphosphate + H(+). Functionally, catalyzes the attachment of tyrosine to tRNA(Tyr) in a two-step reaction: tyrosine is first activated by ATP to form Tyr-AMP and then transferred to the acceptor end of tRNA(Tyr). This is Tyrosine--tRNA ligase from Anaplasma marginale (strain St. Maries).